We begin with the raw amino-acid sequence, 345 residues long: S-adenosylmethionine:tRNA ribosyltransferase-isomerase (345 aa).

It belongs to the QueA family. Monomer.

The protein resides in the cytoplasm. It catalyses the reaction 7-aminomethyl-7-carbaguanosine(34) in tRNA + S-adenosyl-L-methionine = epoxyqueuosine(34) in tRNA + adenine + L-methionine + 2 H(+). It functions in the pathway tRNA modification; tRNA-queuosine biosynthesis. Functionally, transfers and isomerizes the ribose moiety from AdoMet to the 7-aminomethyl group of 7-deazaguanine (preQ1-tRNA) to give epoxyqueuosine (oQ-tRNA). The sequence is that of S-adenosylmethionine:tRNA ribosyltransferase-isomerase from Shewanella sp. (strain MR-7).